The following is a 376-amino-acid chain: Succinyl-diaminopimelate desuccinylase (376 aa).

Residue H67 participates in Zn(2+) binding. D69 is an active-site residue. D100 is a binding site for Zn(2+). E134 functions as the Proton acceptor in the catalytic mechanism. Zn(2+)-binding residues include E135, E163, and H349.

The protein belongs to the peptidase M20A family. DapE subfamily. As to quaternary structure, homodimer. Zn(2+) is required as a cofactor. The cofactor is Co(2+).

It carries out the reaction N-succinyl-(2S,6S)-2,6-diaminopimelate + H2O = (2S,6S)-2,6-diaminopimelate + succinate. The protein operates within amino-acid biosynthesis; L-lysine biosynthesis via DAP pathway; LL-2,6-diaminopimelate from (S)-tetrahydrodipicolinate (succinylase route): step 3/3. Catalyzes the hydrolysis of N-succinyl-L,L-diaminopimelic acid (SDAP), forming succinate and LL-2,6-diaminopimelate (DAP), an intermediate involved in the bacterial biosynthesis of lysine and meso-diaminopimelic acid, an essential component of bacterial cell walls. The protein is Succinyl-diaminopimelate desuccinylase of Xanthomonas campestris pv. campestris (strain B100).